The primary structure comprises 149 residues: uncharacterized protein (149 aa).

A run of 3 helical transmembrane segments spans residues Val39–Gly61, Val82–Leu104, and Trp119–Leu141.

This sequence to M.pneumoniae MPN_090.

It localises to the cell membrane. This is an uncharacterized protein from Mycoplasma pneumoniae (strain ATCC 29342 / M129 / Subtype 1) (Mycoplasmoides pneumoniae).